An 86-amino-acid polypeptide reads, in one-letter code: Small muscular protein (86 aa).

Residues 20–64 (MGAFRPGAGQPPRKKECTPETEEAVLPTSDEEKKPIPGAKKLPGP) form a disordered region.

It belongs to the SMPX family. High level of expression found in the heart and skeletal muscle, a very low expression in the lung and spleen and no expression found in the liver, kidney, fat and brain.

Its function is as follows. Plays a role in the regulatory network through which muscle cells coordinate their structural and functional states during growth, adaptation, and repair. In Sus scrofa (Pig), this protein is Small muscular protein (SMPX).